We begin with the raw amino-acid sequence, 98 residues long: Flagellar hook-basal body complex protein FliE (98 aa).

Low complexity predominate over residues 1 to 23 (MNNINDLRLNNNISNTNKSQNST). The segment at 1–24 (MNNINDLRLNNNISNTNKSQNSTG) is disordered.

This sequence belongs to the FliE family.

Its subcellular location is the bacterial flagellum basal body. The protein is Flagellar hook-basal body complex protein FliE of Campylobacter jejuni subsp. jejuni serotype O:2 (strain ATCC 700819 / NCTC 11168).